Here is a 401-residue protein sequence, read N- to C-terminus: Imidazolonepropionase (401 aa).

Histidine 70 and histidine 72 together coordinate Fe(3+). Zn(2+)-binding residues include histidine 70 and histidine 72. Residues arginine 79, tyrosine 142, and histidine 175 each contribute to the 4-imidazolone-5-propanoate site. Tyrosine 142 provides a ligand contact to N-formimidoyl-L-glutamate. Histidine 240 is a binding site for Fe(3+). Zn(2+) is bound at residue histidine 240. 4-imidazolone-5-propanoate is bound at residue glutamine 243. Position 315 (aspartate 315) interacts with Fe(3+). Residue aspartate 315 coordinates Zn(2+). Residues asparagine 317 and glycine 319 each coordinate N-formimidoyl-L-glutamate. Residue threonine 320 coordinates 4-imidazolone-5-propanoate.

Belongs to the metallo-dependent hydrolases superfamily. HutI family. Zn(2+) serves as cofactor. It depends on Fe(3+) as a cofactor.

Its subcellular location is the cytoplasm. The enzyme catalyses 4-imidazolone-5-propanoate + H2O = N-formimidoyl-L-glutamate. Its pathway is amino-acid degradation; L-histidine degradation into L-glutamate; N-formimidoyl-L-glutamate from L-histidine: step 3/3. Functionally, catalyzes the hydrolytic cleavage of the carbon-nitrogen bond in imidazolone-5-propanoate to yield N-formimidoyl-L-glutamate. It is the third step in the universal histidine degradation pathway. In Caulobacter sp. (strain K31), this protein is Imidazolonepropionase.